We begin with the raw amino-acid sequence, 684 residues long: MLRTSLRSVRALGSRPSAAVAGRQWQATVVRRAAVSGQRFFADDKKPVVPEPAQPAVLPASETLTAPSTPPPASPQVEPTSTIAPETTPLTPPAPEATVIPPVAEEPVVPPTLPTPRKKKGFFRRLRNFLLSLTILGAIAFGGGVYYSRINDAFHDFFTEYIPYGEQAVLYLEELDFKKRFPDVVSRVTGRPRDSGEQVKVPAQSGASWRVADGGEPAGRQSSSIKKAAVAAKDAVTKSEPAVVAGANKDTAELPKAESTTTVTPVEPVPVAVAVADPATAVAPADTAAAAAPAKKPFKAPEVDEPSRWPPASPIDPLKVNGATDPIVQDLVHMLNDIITVINHDNANEKYAPTIGKAKNELSKVAGRINEMKAKVEAEASKQVKARVDGFDKAANELVSRVESAMAAQEAAWRREFEEEMIRLKKSYDEKIHLIQDRERQIAEEKLNNRLLEQAIQLQRQFTDDIKKHVEEERDGRLGKLNELSSAVADLEKLTSGWNEVVDTNLRTQQLHVAVEAVRASLQDAHHPRPFIKELVALKEIAAEDPVVDAAISSINPTAYQRGISTSAELIDRFRRVATEVRKASLLPEDAGVASHASSYVLSKLMFKKEGLAAGDDVESILTRTQTYLEEGDLDNAAREINGLQGWAKTLSRDWLGEVRKVLEVQQALEVIQTEARLQSLRME.

Residues 1-41 (MLRTSLRSVRALGSRPSAAVAGRQWQATVVRRAAVSGQRFF) constitute a mitochondrion transit peptide. Residues 42-125 (ADDKKPVVPE…PRKKKGFFRR (84 aa)) lie on the Mitochondrial matrix side of the membrane. Residues 62–102 (ETLTAPSTPPPASPQVEPTSTIAPETTPLTPPAPEATVIPP) form a disordered region. Low complexity predominate over residues 75 to 89 (PQVEPTSTIAPETTP). Residues 126 to 148 (LRNFLLSLTILGAIAFGGGVYYS) traverse the membrane as a helical segment. The Mitochondrial intermembrane portion of the chain corresponds to 149-684 (RINDAFHDFF…EARLQSLRME (536 aa)). 2 disordered regions span residues 189–224 (TGRP…QSSS) and 287–317 (TAAA…PIDP). The stretch at 434–464 (LIQDRERQIAEEKLNNRLLEQAIQLQRQFTD) forms a coiled coil.

Belongs to the MICOS complex subunit Mic60 family. In terms of assembly, component of the mitochondrial contact site and cristae organizing system (MICOS) complex.

It localises to the mitochondrion inner membrane. In terms of biological role, component of the MICOS complex, a large protein complex of the mitochondrial inner membrane that plays crucial roles in the maintenance of crista junctions, inner membrane architecture, and formation of contact sites to the outer membrane. Plays a role in keeping cristae membranes connected to the inner boundary membrane. Also promotes protein import via the mitochondrial intermembrane space assembly (MIA) pathway. This Sordaria macrospora (strain ATCC MYA-333 / DSM 997 / K(L3346) / K-hell) protein is MICOS complex subunit MIC60 (MIC60).